The chain runs to 142 residues: Aspartate 1-decarboxylase (142 aa).

The Schiff-base intermediate with substrate; via pyruvic acid role is filled by Ser25. The residue at position 25 (Ser25) is a Pyruvic acid (Ser). Residue Thr57 participates in substrate binding. Tyr58 acts as the Proton donor in catalysis. 73–75 (GAA) is a substrate binding site.

It belongs to the PanD family. As to quaternary structure, heterooctamer of four alpha and four beta subunits. Pyruvate is required as a cofactor. Is synthesized initially as an inactive proenzyme, which is activated by self-cleavage at a specific serine bond to produce a beta-subunit with a hydroxyl group at its C-terminus and an alpha-subunit with a pyruvoyl group at its N-terminus.

Its subcellular location is the cytoplasm. The enzyme catalyses L-aspartate + H(+) = beta-alanine + CO2. It functions in the pathway cofactor biosynthesis; (R)-pantothenate biosynthesis; beta-alanine from L-aspartate: step 1/1. Functionally, catalyzes the pyruvoyl-dependent decarboxylation of aspartate to produce beta-alanine. The protein is Aspartate 1-decarboxylase of Arthrobacter sp. (strain FB24).